The sequence spans 374 residues: Ribosomal RNA large subunit methyltransferase G (374 aa).

The protein belongs to the methyltransferase superfamily. RlmG family.

It localises to the cytoplasm. The catalysed reaction is guanosine(1835) in 23S rRNA + S-adenosyl-L-methionine = N(2)-methylguanosine(1835) in 23S rRNA + S-adenosyl-L-homocysteine + H(+). In terms of biological role, specifically methylates the guanine in position 1835 (m2G1835) of 23S rRNA. The chain is Ribosomal RNA large subunit methyltransferase G from Pseudomonas aeruginosa (strain UCBPP-PA14).